The chain runs to 284 residues: Nucleotide-binding protein Shewmr4_0670 (284 aa).

8 to 15 contacts ATP; that stretch reads GRSGSGKS. Residue 56-59 participates in GTP binding; that stretch reads DVRN.

It belongs to the RapZ-like family.

In terms of biological role, displays ATPase and GTPase activities. This is Nucleotide-binding protein Shewmr4_0670 from Shewanella sp. (strain MR-4).